The following is a 307-amino-acid chain: Myeloid-associated differentiation marker homolog (307 aa).

MARVEL domains lie at 15-148 (TLKS…AKPG) and 153-304 (YMAT…RLIF). Transmembrane regions (helical) follow at residues 19-39 (PVGILRILEVIFACVTFSLVV), 51-71 (LCMFCWCFCFAVSLVILIVEF), 85-105 (FPITFAMYAVLMCLSATVIYP), 123-143 (IVAIVFSCLTTLAYIIEVSLT), 156-176 (TTPGLLKVLETFIACIIFVFI), 190-210 (WCLAVYCICFILSIVVIILCV), 228-248 (YALLAVLMYASAMIIWPIFSF), and 278-298 (MVAVAVLTAVNLIAYVMDLVY).

This sequence belongs to the MAL family.

It is found in the membrane. This is Myeloid-associated differentiation marker homolog (myadm) from Xenopus laevis (African clawed frog).